Consider the following 393-residue polypeptide: Putative F-box protein At1g55070 (393 aa).

The F-box domain maps to 29–74 (GEYFDRIPADLVIKILSKLSAKSMAKCRCVCKLLSSIIRQPNYNQL).

This chain is Putative F-box protein At1g55070, found in Arabidopsis thaliana (Mouse-ear cress).